The chain runs to 256 residues: Pyridoxine 5'-phosphate synthase (256 aa).

3-amino-2-oxopropyl phosphate is bound by residues N8 and R19. The active-site Proton acceptor is H44. 2 residues coordinate 1-deoxy-D-xylulose 5-phosphate: R46 and H51. Residue E74 is the Proton acceptor of the active site. Residue T111 participates in 1-deoxy-D-xylulose 5-phosphate binding. H202 functions as the Proton donor in the catalytic mechanism. Residues D203 and 225 to 226 contribute to the 3-amino-2-oxopropyl phosphate site; that span reads GH.

The protein belongs to the PNP synthase family. Homooctamer; tetramer of dimers.

The protein localises to the cytoplasm. It carries out the reaction 3-amino-2-oxopropyl phosphate + 1-deoxy-D-xylulose 5-phosphate = pyridoxine 5'-phosphate + phosphate + 2 H2O + H(+). The protein operates within cofactor biosynthesis; pyridoxine 5'-phosphate biosynthesis; pyridoxine 5'-phosphate from D-erythrose 4-phosphate: step 5/5. Its function is as follows. Catalyzes the complicated ring closure reaction between the two acyclic compounds 1-deoxy-D-xylulose-5-phosphate (DXP) and 3-amino-2-oxopropyl phosphate (1-amino-acetone-3-phosphate or AAP) to form pyridoxine 5'-phosphate (PNP) and inorganic phosphate. The protein is Pyridoxine 5'-phosphate synthase of Xanthomonas campestris pv. campestris (strain 8004).